A 125-amino-acid chain; its full sequence is Large ribosomal subunit protein mL51 (125 aa).

A mitochondrion-targeting transit peptide spans 1–29 (MWSVQKLLWGCRSLLPQGCRSFSLGNRDL).

The protein belongs to the mitochondrion-specific ribosomal protein mL51 family. Component of the mitochondrial ribosome large subunit (39S) which comprises a 16S rRNA and about 50 distinct proteins.

The protein localises to the mitochondrion. The protein is Large ribosomal subunit protein mL51 (mrpl51) of Xenopus laevis (African clawed frog).